Here is a 449-residue protein sequence, read N- to C-terminus: Putative cytochrome P450 135A1 (449 aa).

Heme is bound at residue Cys-383.

This sequence belongs to the cytochrome P450 family. The cofactor is heme.

This chain is Putative cytochrome P450 135A1 (cyp135A1), found in Mycobacterium tuberculosis (strain CDC 1551 / Oshkosh).